The sequence spans 385 residues: S-adenosylmethionine synthase (385 aa).

Histidine 15 contributes to the ATP binding site. Position 17 (aspartate 17) interacts with Mg(2+). Position 43 (glutamate 43) interacts with K(+). The L-methionine site is built by glutamate 56 and glutamine 99. The tract at residues 99-109 is flexible loop; it reads QSPDINQGVDR. ATP is bound by residues 164–166, 230–231, aspartate 239, 245–246, alanine 262, and lysine 266; these read DAK, RF, and RK. L-methionine is bound at residue aspartate 239. Position 270 (lysine 270) interacts with L-methionine.

The protein belongs to the AdoMet synthase family. In terms of assembly, homotetramer; dimer of dimers. Mg(2+) is required as a cofactor. It depends on K(+) as a cofactor.

It localises to the cytoplasm. The enzyme catalyses L-methionine + ATP + H2O = S-adenosyl-L-methionine + phosphate + diphosphate. It functions in the pathway amino-acid biosynthesis; S-adenosyl-L-methionine biosynthesis; S-adenosyl-L-methionine from L-methionine: step 1/1. In terms of biological role, catalyzes the formation of S-adenosylmethionine (AdoMet) from methionine and ATP. The overall synthetic reaction is composed of two sequential steps, AdoMet formation and the subsequent tripolyphosphate hydrolysis which occurs prior to release of AdoMet from the enzyme. This chain is S-adenosylmethionine synthase, found in Sodalis glossinidius (strain morsitans).